We begin with the raw amino-acid sequence, 1293 residues long: Cilia- and flagella-associated protein 57 A (1293 aa).

One copy of the WD 1 repeat lies at 72-113 (PGTKGITCMTLSPSKRLLAWSEDCDSGIIVVFDLIKLDKLEK). The interval 117–143 (QNYQEPSDKDKLDKQAEKDRRDRFEKE) is disordered. A compositionally biased stretch (basic and acidic residues) spans 122–143 (PSDKDKLDKQAEKDRRDRFEKE). 5 WD repeats span residues 309 to 348 (PKNE…KNPY), 359 to 398 (DMKA…MQLN), 411 to 450 (FHSD…LENS), 535 to 574 (RGSG…PQKT), and 700 to 739 (SHFG…YQVK). Coiled coils occupy residues 756 to 1016 (RDQY…REKT), 1045 to 1079 (IKEL…FKRT), and 1209 to 1285 (INHL…QIQN).

This sequence belongs to the CFAP57 family. As to quaternary structure, forms a heterodimer with CFAP57C. Associates with components of the nexin-dynein regulatory complex (N-DRC) and the CFAP184:CFAP263 complex.

Its subcellular location is the cell projection. It localises to the cilium. Associates with components of the nexin-dynein regulatory complex (N-DRC), a key regulator of ciliary/flagellar motility, and might act as an inner dynein arm (IDA) hub or linkage. This chain is Cilia- and flagella-associated protein 57 A (CFAP57A), found in Tetrahymena thermophila (strain SB210).